The following is a 911-amino-acid chain: Viral IRF4-like protein (911 aa).

A DNA-binding region (IRF tryptophan pentad repeat) is located at residues 7-114 (SEWATLWIID…GSYVVWQLVR (108 aa)). Disordered regions lie at residues 147–184 (TTAT…PRKS), 211–302 (ASTS…SRLP), 494–537 (GGAP…PYVC), and 681–727 (ELQE…FFDP). The span at 211-221 (ASTSGMGSSGT) shows a compositional bias: low complexity. Polar residues-rich tracts occupy residues 222-231 (RQVTQASSFT) and 495-505 (GAPNQGLSHTQ). A compositionally biased stretch (basic residues) spans 697–710 (RRPRSRSPHGRRTP).

It belongs to the IRF family. In terms of assembly, interacts with host MDM2; this interaction facilitates the proteasomal degradation of TP53/p53. Interacts with host IRF7; this interaction prevents IRF7 dimerization and subsequent activation.

It is found in the host nucleus. Plays a role in host cell apoptosis modulation by promoting TP53/p53 ubiquitination and subsequent degradation and thus down-regulating TP53/p53-mediated apoptosis. Works as a potential viral transcription factor to modulate host gene expression to build favorable environments for the viral lytic life cycle and greatly accelerates the induction of an immediate early gene RTA, early genes ORF36 and ORF57, late genes ORF25 and ORF64, and latent genes LANA1 and v-IRF3. Inhibits host interferon-alpha production by interacting with host IRF7 and preventing IRF7 dimerization. In Homo sapiens (Human), this protein is Viral IRF4-like protein (vIRF-4).